The primary structure comprises 336 residues: Serpentine receptor class beta-15 (336 aa).

7 helical membrane-spanning segments follow: residues Leu-24 to Phe-44, Phe-57 to Ser-77, Ile-109 to Met-129, Leu-142 to Tyr-162, Phe-186 to Leu-206, Val-237 to Leu-257, and Gly-276 to Leu-296.

This sequence belongs to the nematode receptor-like protein srb family.

The protein localises to the membrane. The sequence is that of Serpentine receptor class beta-15 (srb-15) from Caenorhabditis elegans.